Consider the following 197-residue polypeptide: Stanniocalcin-2 (197 aa).

Positions 1 to 20 are disordered; it reads TDAXNPPEGPQDRGSQQKGR.

The protein belongs to the stanniocalcin family. As to quaternary structure, homodimer; disulfide-linked.

It is found in the secreted. In terms of biological role, has an anti-hypocalcemic action on calcium and phosphate homeostasis. This Cavia porcellus (Guinea pig) protein is Stanniocalcin-2 (STC2).